Reading from the N-terminus, the 485-residue chain is Glutamyl-tRNA(Gln) amidotransferase subunit A (485 aa).

Catalysis depends on charge relay system residues lysine 78 and serine 153. The active-site Acyl-ester intermediate is serine 177.

The protein belongs to the amidase family. GatA subfamily. In terms of assembly, heterotrimer of A, B and C subunits.

The catalysed reaction is L-glutamyl-tRNA(Gln) + L-glutamine + ATP + H2O = L-glutaminyl-tRNA(Gln) + L-glutamate + ADP + phosphate + H(+). Functionally, allows the formation of correctly charged Gln-tRNA(Gln) through the transamidation of misacylated Glu-tRNA(Gln) in organisms which lack glutaminyl-tRNA synthetase. The reaction takes place in the presence of glutamine and ATP through an activated gamma-phospho-Glu-tRNA(Gln). The protein is Glutamyl-tRNA(Gln) amidotransferase subunit A of Desulfotalea psychrophila (strain LSv54 / DSM 12343).